A 201-amino-acid chain; its full sequence is MEEYLVPLDQYLAAGVHIGTQQKTKDMKKFIYRVRQDGLYVLDVRKTDERLRVAGKFLAKFDPESILAVSVRLYGQRPVKKFGEVTGAKAIPGRFLPGTMTNPQVKNFIEPDVLIVTDPRADHQALKEAVEIGIPIVALVDTENFLSYVDIAIPTNNKGRKALALIYWILAREVLYNRKEIESREDFKIPVEDFEMRIIRT.

Belongs to the universal ribosomal protein uS2 family. In terms of assembly, part of the 50S ribosomal subunit.

The chain is Small ribosomal subunit protein uS2 from Thermococcus kodakarensis (strain ATCC BAA-918 / JCM 12380 / KOD1) (Pyrococcus kodakaraensis (strain KOD1)).